A 253-amino-acid polypeptide reads, in one-letter code: Small ribosomal subunit protein uS2 (253 aa).

A disordered region spans residues 226–253; it reads QGADNADVEKELSESVEENSAEEVDDAE. Residues 239–253 are compositionally biased toward acidic residues; the sequence is ESVEENSAEEVDDAE.

The protein belongs to the universal ribosomal protein uS2 family.

This is Small ribosomal subunit protein uS2 from Lactobacillus delbrueckii subsp. bulgaricus (strain ATCC 11842 / DSM 20081 / BCRC 10696 / JCM 1002 / NBRC 13953 / NCIMB 11778 / NCTC 12712 / WDCM 00102 / Lb 14).